The primary structure comprises 180 residues: UPF0227 protein KPN78578_10770 (180 aa).

It belongs to the UPF0227 family.

The polypeptide is UPF0227 protein KPN78578_10770 (Klebsiella pneumoniae subsp. pneumoniae (strain ATCC 700721 / MGH 78578)).